The chain runs to 274 residues: ATP synthase subunit b 2 (274 aa).

A helical membrane pass occupies residues 2-22 (HIDWFVLLAQLVNFLILIYLL).

It belongs to the ATPase B chain family. In terms of assembly, F-type ATPases have 2 components, F(1) - the catalytic core - and F(0) - the membrane proton channel. F(1) has five subunits: alpha(3), beta(3), gamma(1), delta(1), epsilon(1). F(0) has three main subunits: a(1), b(2) and c(10-14). The alpha and beta chains form an alternating ring which encloses part of the gamma chain. F(1) is attached to F(0) by a central stalk formed by the gamma and epsilon chains, while a peripheral stalk is formed by the delta and b chains.

It localises to the cell inner membrane. Functionally, f(1)F(0) ATP synthase produces ATP from ADP in the presence of a proton or sodium gradient. F-type ATPases consist of two structural domains, F(1) containing the extramembraneous catalytic core and F(0) containing the membrane proton channel, linked together by a central stalk and a peripheral stalk. During catalysis, ATP synthesis in the catalytic domain of F(1) is coupled via a rotary mechanism of the central stalk subunits to proton translocation. In terms of biological role, component of the F(0) channel, it forms part of the peripheral stalk, linking F(1) to F(0). This is ATP synthase subunit b 2 from Syntrophus aciditrophicus (strain SB).